We begin with the raw amino-acid sequence, 646 residues long: Phosphomethylpyrimidine synthase (646 aa).

Substrate-binding positions include Asn-235, Met-264, Tyr-293, His-329, 349-351, 390-393, and Glu-429; these read SRG and DGLR. Residue His-433 coordinates Zn(2+). Residue Tyr-456 participates in substrate binding. His-497 serves as a coordination point for Zn(2+). [4Fe-4S] cluster-binding residues include Cys-577, Cys-580, and Cys-585. A disordered region spans residues 624-646; that stretch reads KSEEFRATGSELYHPAVHAEADE.

The protein belongs to the ThiC family. Homodimer. The cofactor is [4Fe-4S] cluster.

The catalysed reaction is 5-amino-1-(5-phospho-beta-D-ribosyl)imidazole + S-adenosyl-L-methionine = 4-amino-2-methyl-5-(phosphooxymethyl)pyrimidine + CO + 5'-deoxyadenosine + formate + L-methionine + 3 H(+). It functions in the pathway cofactor biosynthesis; thiamine diphosphate biosynthesis. In terms of biological role, catalyzes the synthesis of the hydroxymethylpyrimidine phosphate (HMP-P) moiety of thiamine from aminoimidazole ribotide (AIR) in a radical S-adenosyl-L-methionine (SAM)-dependent reaction. The sequence is that of Phosphomethylpyrimidine synthase from Vibrio parahaemolyticus serotype O3:K6 (strain RIMD 2210633).